The primary structure comprises 248 residues: Trypsin II-P29 (248 aa).

The first 16 residues, 1–16, serve as a signal peptide directing secretion; that stretch reads MKFLFLILSCLGAAVA. A propeptide spans 17 to 25 (activation peptide); the sequence is FPGGADDDK. The region spanning 26–246 is the Peptidase S1 domain; it reads IVGGYTCPEH…YVDWIQETIA (221 aa). 6 cysteine pairs are disulfide-bonded: C32-C162, C50-C66, C134-C235, C141-C208, C173-C187, and C198-C222. H65 acts as the Charge relay system in catalysis. Residues E77, N79, V82, and E87 each coordinate Ca(2+). D109 functions as the Charge relay system in the catalytic mechanism. S202 functions as the Charge relay system in the catalytic mechanism.

This sequence belongs to the peptidase S1 family. Ca(2+) serves as cofactor. As to expression, high levels are seen in the pancreas while lower levels are found in the liver, spleen and thymus.

It localises to the secreted. The protein resides in the extracellular space. It carries out the reaction Preferential cleavage: Arg-|-Xaa, Lys-|-Xaa.. The chain is Trypsin II-P29 from Gallus gallus (Chicken).